We begin with the raw amino-acid sequence, 362 residues long: 3-dehydroquinate synthase (362 aa).

NAD(+)-binding positions include Asp71–Lys76, Gly105–Asp109, Thr129–Thr130, Lys142, Lys151, and Cys169–Thr172. Glu184, His247, and His264 together coordinate Zn(2+).

This sequence belongs to the sugar phosphate cyclases superfamily. Dehydroquinate synthase family. Co(2+) is required as a cofactor. The cofactor is Zn(2+). NAD(+) serves as cofactor.

It is found in the cytoplasm. The enzyme catalyses 7-phospho-2-dehydro-3-deoxy-D-arabino-heptonate = 3-dehydroquinate + phosphate. Its pathway is metabolic intermediate biosynthesis; chorismate biosynthesis; chorismate from D-erythrose 4-phosphate and phosphoenolpyruvate: step 2/7. In terms of biological role, catalyzes the conversion of 3-deoxy-D-arabino-heptulosonate 7-phosphate (DAHP) to dehydroquinate (DHQ). The polypeptide is 3-dehydroquinate synthase (Shigella boydii serotype 18 (strain CDC 3083-94 / BS512)).